The chain runs to 727 residues: Zinc metalloproteinase nas-38 (727 aa).

The first 25 residues, 1-25, serve as a signal peptide directing secretion; the sequence is MPSPSYNRHIIIASCFCCLLIFSSA. A propeptide spanning residues 26–114 is cleaved from the precursor; it reads ARVPKASKKH…FTQGKREKRK (89 aa). The 200-residue stretch at 113-312 folds into the Peptidase M12A domain; sequence RKIGRNPLYK…QAINMAYGCT (200 aa). Intrachain disulfides connect C158-C311 and C179-C199. H207 is a binding site for Zn(2+). E208 is a catalytic residue. Zn(2+)-binding residues include H211 and H217. Positions 306-345 constitute an EGF-like domain; the sequence is NMAYGCTESCADLPCLRNGYTHPNNCSMCACPEGLSGRYC. N-linked (GlcNAc...) asparagine glycosylation occurs at N330. Residues 353 to 469 enclose the CUB domain; sequence AQCGGVIFAT…AGFKAKFWSN (117 aa). Intrachain disulfides connect C355–C383 and C411–C432. Disordered regions lie at residues 473–506 and 532–561; these read PEGV…QSTT and TPLT…TEPS. Over residues 535–554 the composition is skewed to low complexity; sequence TSSSTTTESTTVSSTTQSTT. A TSP type-1 domain is found at 610 to 658; sequence ECGCGAWSEWQGECSQQCGGCGHRLRKRECKKEACRKEEKRPCNFSACP. Intrachain disulfides connect C611-C644, C623-C652, C627-C657, and C639-C644. N-linked (GlcNAc...) asparagine glycans are attached at residues N653 and N714.

Zn(2+) serves as cofactor. As to expression, expressed in the epidermis, the excretory canal cell, duct cell, pore cell, and excretory gland cell. Expressed in an oscillating pattern in epithelial cells with increased expression during the lethargus phase which occurs during molting between larval and adult stages. Not expressed in seam cells or in the RIS neuron.

It is found in the secreted. Metalloprotease. As part of the innate immune response to molting and injury to the adult epidermis, positively regulates the activity of the transcription factor sta-2 to promote the expression of epidermal antimicrobial peptides such as nlp-29. Through regulating the expression of epidermal antimicrobial peptides such as nlp-29, modulates sleep duration and locomotion quiescence during the sleep-like state called lethargus which occurs during molting between larval and adult stages. This may occur through the sleep-active RIS neuron. The protein is Zinc metalloproteinase nas-38 of Caenorhabditis elegans.